The chain runs to 364 residues: Monocarboxylate 2-oxoacid-binding periplasmic protein all3028 (364 aa).

A signal peptide spans M1–N26. Residues Y103–Y104, Q160, and R181 contribute to the substrate site. Q160 contributes to the Na(+) binding site. Na(+) contacts are provided by E218, W219, and E244.

Belongs to the bacterial solute-binding protein 7 family. As to quaternary structure, homodimer. The complex comprises the extracytoplasmic solute receptor protein all3028, and the two putative transmembrane proteins alr3026 and alr3027.

The protein localises to the periplasm. Pyruvate uptake inhibited by 2-oxobutyrate, 2-oxovalerate, 2-oxoisovalerate, 2-oxoisocaproate and 2-oxo-3-methylvalerate. Functionally, part of the tripartite ATP-independent periplasmic (TRAP) transport system involved in the uptake of monocarboxylate 2-oxoacids. This protein specifically binds monocarboxylate 2-oxoacids including pyruvate, 2-oxobutyrate, 2-oxovalerate, 2-oxoisovalerate, 2-oxoisocaproate and 2-oxo-3-methylvalerate. Is not able to bind mannitol. The polypeptide is Monocarboxylate 2-oxoacid-binding periplasmic protein all3028 (Nostoc sp. (strain PCC 7120 / SAG 25.82 / UTEX 2576)).